The following is a 455-amino-acid chain: MPRLARRIYGIENEYGITCTQRGQRRLSPDEVARYLFRRVVSWGRSSNVFLENGARLYLDVGSHPEYATPECDSLSDLVAHDKAGERILESLAHSAEAKMREEGIRGDVFLLKNNTDSAGNSYGCHENYLTVRVDDLTRLVEVLIPFLVSRQIIAGAGKVLLTSRGPLYAVSQRAEHIWEGVSSATTRSRPIINTRDEPHADAERYRRLHVIVGDSNMSQWATYLKVGAMAIVLRLLEEEVVLRDLTLENPIRAIREIAHDTELERTVRLVNGRELTGLEIQEAYFERAERYHERIGLPADEARALDMWREALKALRANDHEALFGKVDWVTKLTLIEAFRARHQLPLSHPQVSLLDLQYHDISRERGLFARLEAKGRVPRIVDDETIERAVDEPPATTRAALRGRFIRAAKEAHRDYTVDWVHLKLNDQAQRTVMLKDPFASEDERVDRLLTSI.

A Mg(2+)-binding site is contributed by Glu-12. Arg-56 contacts ATP. Tyr-58 is a binding site for Mg(2+). Asp-60 functions as the Proton acceptor in the catalytic mechanism. Residue Glu-66 coordinates Mg(2+). Residues Thr-69 and Trp-422 each coordinate ATP.

The protein belongs to the Pup ligase/Pup deamidase family. Pup-conjugating enzyme subfamily.

It catalyses the reaction ATP + [prokaryotic ubiquitin-like protein]-L-glutamate + [protein]-L-lysine = ADP + phosphate + N(6)-([prokaryotic ubiquitin-like protein]-gamma-L-glutamyl)-[protein]-L-lysine.. It participates in protein degradation; proteasomal Pup-dependent pathway. Its pathway is protein modification; protein pupylation. In terms of biological role, catalyzes the covalent attachment of the prokaryotic ubiquitin-like protein modifier Pup to the proteasomal substrate proteins, thereby targeting them for proteasomal degradation. This tagging system is termed pupylation. The ligation reaction involves the side-chain carboxylate of the C-terminal glutamate of Pup and the side-chain amino group of a substrate lysine. This chain is Pup--protein ligase, found in Acidimicrobium ferrooxidans (strain DSM 10331 / JCM 15462 / NBRC 103882 / ICP).